Consider the following 760-residue polypeptide: Endoplasmin homolog (760 aa).

The N-terminal stretch at 1–23 is a signal peptide; that stretch reads MRFLLVGFVALLAVSAFIPNVYA. ATP is bound by residues asparagine 95, aspartate 137, asparagine 150, and phenylalanine 187. Asparagine 95 carries N-linked (GlcNAc...) asparagine glycosylation. Asparagine 423 carries N-linked (GlcNAc...) asparagine glycosylation. The tract at residues 727 to 760 is disordered; that stretch reads SQDAQVETEQHIEEAEPEPEAAEETTIEEEHSEL. The span at 741–760 shows a compositional bias: acidic residues; that stretch reads AEPEPEAAEETTIEEEHSEL. The Prevents secretion from ER motif lies at 757 to 760; sequence HSEL.

Belongs to the heat shock protein 90 family.

The protein resides in the endoplasmic reticulum lumen. Functionally, molecular chaperone that functions in the processing and transport of secreted proteins. The protein is Endoplasmin homolog of Caenorhabditis elegans.